The sequence spans 838 residues: Protein translocase subunit SecA (838 aa).

Residues Q87, 105–109, and D494 each bind ATP; that span reads GEGKT. 2 stretches are compositionally biased toward basic and acidic residues: residues 781-790 and 803-819; these read EQEFQHKDET and EDAK…KVGR. The interval 781–838 is disordered; that stretch reads EQEFQHKDETANVQYSGPAESAEDAKKEPKRREAPKVGRNDPCPCGSGKKYKKCHGAK. Residues C823, C825, C834, and H835 each coordinate Zn(2+). The segment covering 829 to 838 has biased composition (basic residues); it reads KKYKKCHGAK.

This sequence belongs to the SecA family. As to quaternary structure, monomer and homodimer. Part of the essential Sec protein translocation apparatus which comprises SecA, SecYEG and auxiliary proteins SecDF-YajC and YidC. Zn(2+) is required as a cofactor.

The protein resides in the cell inner membrane. The protein localises to the cytoplasm. It catalyses the reaction ATP + H2O + cellular proteinSide 1 = ADP + phosphate + cellular proteinSide 2.. Its function is as follows. Part of the Sec protein translocase complex. Interacts with the SecYEG preprotein conducting channel. Has a central role in coupling the hydrolysis of ATP to the transfer of proteins into and across the cell membrane, serving as an ATP-driven molecular motor driving the stepwise translocation of polypeptide chains across the membrane. The protein is Protein translocase subunit SecA of Solidesulfovibrio magneticus (strain ATCC 700980 / DSM 13731 / RS-1) (Desulfovibrio magneticus).